Consider the following 151-residue polypeptide: Transcription antitermination protein NusB (151 aa).

This sequence belongs to the NusB family.

Its function is as follows. Involved in transcription antitermination. Required for transcription of ribosomal RNA (rRNA) genes. Binds specifically to the boxA antiterminator sequence of the ribosomal RNA (rrn) operons. This Thermus thermophilus (strain ATCC BAA-163 / DSM 7039 / HB27) protein is Transcription antitermination protein NusB.